The following is a 264-amino-acid chain: Expansin-B3 (264 aa).

The signal sequence occupies residues 1–25 (MQLFPVMLATLCIVLQLLIGSSALA). In terms of domain architecture, Expansin-like EG45 spans 54–162 (GGACGYGTLV…RRTACKYRGK (109 aa)). Disulfide bonds link Cys-57–Cys-86, Cys-89–Cys-157, and Cys-94–Cys-100. The Expansin-like CBD domain occupies 175-256 (FWLSLLVEFE…NWAPKATYSS (82 aa)).

This sequence belongs to the expansin family. Expansin B subfamily.

It localises to the secreted. Its subcellular location is the cell wall. The protein resides in the membrane. Its function is as follows. May cause loosening and extension of plant cell walls by disrupting non-covalent bonding between cellulose microfibrils and matrix glucans. No enzymatic activity has been found. This is Expansin-B3 (EXPB3) from Arabidopsis thaliana (Mouse-ear cress).